The chain runs to 100 residues: Large ribosomal subunit protein uL23 (100 aa).

The protein belongs to the universal ribosomal protein uL23 family. Part of the 50S ribosomal subunit. Contacts protein L29, and trigger factor when it is bound to the ribosome.

One of the early assembly proteins it binds 23S rRNA. One of the proteins that surrounds the polypeptide exit tunnel on the outside of the ribosome. Forms the main docking site for trigger factor binding to the ribosome. This chain is Large ribosomal subunit protein uL23, found in Synechococcus sp. (strain CC9902).